We begin with the raw amino-acid sequence, 451 residues long: Chromosomal replication initiator protein DnaA 2 (451 aa).

The interval 1–68 is domain I, interacts with DnaA modulators; that stretch reads MQAWEEFLKA…QQKFINGNNK (68 aa). A domain II region spans residues 68–104; it reads KRIKIHLSVANTPQRAKKTKTANKEKDFKAPFELTFD. Residues 105–326 form a domain III, AAA+ region region; that stretch reads ELDPLCLFPY…KGLEALVLRL (222 aa). Residues glycine 156, glycine 158, lysine 159, and threonine 160 each coordinate ATP. The segment at 327-451 is domain IV, binds dsDNA; it reads HLDAKHSITA…CHIILKKLQG (125 aa).

This sequence belongs to the DnaA family. As to quaternary structure, oligomerizes as a right-handed, spiral filament on DNA at oriC.

It localises to the cytoplasm. Functionally, plays an essential role in the initiation and regulation of chromosomal replication. ATP-DnaA binds to the origin of replication (oriC) to initiate formation of the DNA replication initiation complex once per cell cycle. Binds the DnaA box (a 9 base pair repeat at the origin) and separates the double-stranded (ds)DNA. Forms a right-handed helical filament on oriC DNA; dsDNA binds to the exterior of the filament while single-stranded (ss)DNA is stabiized in the filament's interior. The ATP-DnaA-oriC complex binds and stabilizes one strand of the AT-rich DNA unwinding element (DUE), permitting loading of DNA polymerase. After initiation quickly degrades to an ADP-DnaA complex that is not apt for DNA replication. Binds acidic phospholipids. This Protochlamydia amoebophila (strain UWE25) protein is Chromosomal replication initiator protein DnaA 2.